The following is a 486-amino-acid chain: MAEFETIIGLEVHAQLNTESKIFSTSATKFGSPPNSQTNPVCLGLPGALPVLNEFALEKAIMAGLAFGCDITLFTKFDRKNYFYPDLPKGYQISQFDKPICTGGGVTFTIKGEDSARYVRLTRIHLEEDAGKLIHSADPNIPQSYVDLNRAGTPLIEIVSEPDMRSSDEAYYYLNSLKSVLKYIRVSDCNMEEGSLRCDANVSIRPKGSDKFGTRVEIKNLNSFKAVKAAIDYEVEWQKEMALEGKTFQQQTKLWDSVANKTVTMRTKEMSHDYRYFPDPDLPVIVLQKETVESVRSKLPELPNERKNRFVEKLGLPKYDAEVLTAEREVADYFEDALKVSGDAKKTSNWVKDEILGIVNKENITISEFSVSARRIGELVKLIADGKISGKIAKTVFEELLTSDKDAETIVTEKNLIVVRDDKEIERIVDEAIANNQDAVTKYKSGKDRALGAIVGYVMKVSKGKADPELVNQMLLEKLGPLPPKS.

It belongs to the GatB/GatE family. GatB subfamily. As to quaternary structure, heterotrimer of A, B and C subunits.

The catalysed reaction is L-glutamyl-tRNA(Gln) + L-glutamine + ATP + H2O = L-glutaminyl-tRNA(Gln) + L-glutamate + ADP + phosphate + H(+). It carries out the reaction L-aspartyl-tRNA(Asn) + L-glutamine + ATP + H2O = L-asparaginyl-tRNA(Asn) + L-glutamate + ADP + phosphate + 2 H(+). Allows the formation of correctly charged Asn-tRNA(Asn) or Gln-tRNA(Gln) through the transamidation of misacylated Asp-tRNA(Asn) or Glu-tRNA(Gln) in organisms which lack either or both of asparaginyl-tRNA or glutaminyl-tRNA synthetases. The reaction takes place in the presence of glutamine and ATP through an activated phospho-Asp-tRNA(Asn) or phospho-Glu-tRNA(Gln). This chain is Aspartyl/glutamyl-tRNA(Asn/Gln) amidotransferase subunit B, found in Leptospira interrogans serogroup Icterohaemorrhagiae serovar Lai (strain 56601).